A 192-amino-acid polypeptide reads, in one-letter code: uncharacterized protein (192 aa).

Residues 29–160 form the Nudix hydrolase domain; that stretch reads QRQAAVLVPI…PLDIHRRGND (132 aa). The Nudix box signature appears at 67–89; the sequence is GAVDNTDATLIAAALREAQEEVA. Glutamate 83 and glutamate 87 together coordinate Mg(2+).

Belongs to the Nudix hydrolase family. PCD1 subfamily. Requires Mn(2+) as cofactor. Mg(2+) is required as a cofactor.

Probably mediates the hydrolysis of some nucleoside diphosphate derivatives. This is an uncharacterized protein from Klebsiella pneumoniae (strain 342).